The following is a 148-amino-acid chain: Large ribosomal subunit protein uL15 (148 aa).

The disordered stretch occupies residues 1–47 (MTKLEDLRPTPGSVKPRKRVGRGIGSGHGKTSGRGHKGQKSRGSGKV). Residues 31–45 (TSGRGHKGQKSRGSG) show a composition bias toward basic residues.

The protein belongs to the universal ribosomal protein uL15 family. As to quaternary structure, part of the 50S ribosomal subunit.

In terms of biological role, binds to the 23S rRNA. The protein is Large ribosomal subunit protein uL15 of Pseudothermotoga lettingae (strain ATCC BAA-301 / DSM 14385 / NBRC 107922 / TMO) (Thermotoga lettingae).